A 280-amino-acid chain; its full sequence is MSSSLQELCRKKLPDCILPEFFDDYVLQLLGLHWQDHGSLQRIEKNQILVQQEPIHINEALKVAASEGNYEIVELLLSWEADPRYAVVGALESKYYDLVHKYYGQVKDCHDILPLIQNPETFEKCHELNSTCSLKCLFKHAVMNDMLPILEKYTDYLDRWEYCSQMLFELACRKKKYEMVVWIEGVLGVGKVTSLFTIAISNRDLQLYSLGFSIILEKLYSCGQDPTFLLNHFLRDVSIKGLLPFVLKTIEYGGSKEIAITLAKKYQHKHILKYFETWES.

It belongs to the asfivirus MGF 505 family.

Plays a role in virus cell tropism, and may be required for efficient virus replication in macrophages. The polypeptide is Protein MGF 505-3R (African swine fever virus (isolate Warthog/Namibia/Wart80/1980) (ASFV)).